The sequence spans 748 residues: Pentatricopeptide repeat-containing protein At3g13880 (748 aa).

PPR repeat units lie at residues 46–80 (DSEG…SLNP), 81–111 (CLYL…MPER), 112–146 (NIIS…NLKL), 147–181 (DKFT…GLSQ), 182–212 (QVFL…CDER), 213–247 (DQVS…GLNL), 248–285 (TTYA…GMEF), 286–316 (DIVV…MPSK), 317–356 (NVVT…GLEP), 357–391 (SPST…NFQS), 392–422 (DEFI…TSKQ), 423–457 (DIAS…HIRP), 458–492 (EEYT…GIDA), 493–523 (FTSV…VQNP), 524–558 (DVAT…GIKP), 559–589 (NQQA…MKND), and 595–629 (NEKH…DHPV). Residues 630–705 (TWRALLSSCR…EPALSWIVIG (76 aa)) are type E motif. A type E(+) motif region spans residues 706 to 736 (NQTHSFAVADLSHPSSQMIYTMLETMDNVDF).

It belongs to the PPR family. PCMP-E subfamily.

This is Pentatricopeptide repeat-containing protein At3g13880 (PCMP-E89) from Arabidopsis thaliana (Mouse-ear cress).